Reading from the N-terminus, the 128-residue chain is Small ribosomal subunit protein uS9 (128 aa).

It belongs to the universal ribosomal protein uS9 family.

This is Small ribosomal subunit protein uS9 from Flavobacterium psychrophilum (strain ATCC 49511 / DSM 21280 / CIP 103535 / JIP02/86).